The sequence spans 243 residues: ADP-ribosylation factor-like protein 10 (243 aa).

Residues 83–90, 127–131, and 184–187 contribute to the GTP site; these read GLDGSGKS, EIGGS, and NKQD.

It belongs to the small GTPase superfamily. Arf family.

The sequence is that of ADP-ribosylation factor-like protein 10 (Arl10) from Mus musculus (Mouse).